A 454-amino-acid polypeptide reads, in one-letter code: Trichosetin biosynthesis cluster transcription factor TF22 (454 aa).

The zn(2)-C6 fungal-type DNA-binding region spans 13–47 (CDRCRSHKLKCTVSPEDSRSGPHKCTRCIRAQVTC). The disordered stretch occupies residues 51–89 (PRSQSKRTPNGKNKPEKPKPELEPPQKTSPPVCSSSLAG). Residues 52 to 61 (RSQSKRTPNG) show a composition bias toward polar residues. Basic and acidic residues predominate over residues 63 to 74 (NKPEKPKPELEP).

It localises to the nucleus. Functionally, transcription factor that regulates the expression of the gene cluster that mediates the biosynthesis of trichosetin, a trans-fused decalin-containing tetramic acid with antimicrobial activity. Directly activates expression of only the three biosynthetic genes PKS-NRPS1, DA and ER, while TF23 and MFS-T are induced by the final product trichosetin and not by TF22. The sequence is that of Trichosetin biosynthesis cluster transcription factor TF22 from Gibberella fujikuroi (strain CBS 195.34 / IMI 58289 / NRRL A-6831) (Bakanae and foot rot disease fungus).